A 206-amino-acid polypeptide reads, in one-letter code: MRLFVGLGNPGAKYQGNRHNIGFMVIDEIARRHGFSPWRRRFQGETADGVLDGERITLLKPLTYMNESGRAVQDAASFYKIGQNEIAVFHDEIELPPAKVRVKVGGGIAGHNGLRSISAHIGNDYLRVRLGVGHPGAKELVHNHVLGDFAKSERPWVEALCEIAADNAGLIAKGKDASFANKVHLAMQAKGFYDNDKQAKGGERDK.

Tyr-14 contacts tRNA. Residue His-19 is the Proton acceptor of the active site. Residues Tyr-64, Asn-66, and Asn-112 each contribute to the tRNA site.

The protein belongs to the PTH family. In terms of assembly, monomer.

It is found in the cytoplasm. The enzyme catalyses an N-acyl-L-alpha-aminoacyl-tRNA + H2O = an N-acyl-L-amino acid + a tRNA + H(+). Its function is as follows. Hydrolyzes ribosome-free peptidyl-tRNAs (with 1 or more amino acids incorporated), which drop off the ribosome during protein synthesis, or as a result of ribosome stalling. Catalyzes the release of premature peptidyl moieties from peptidyl-tRNA molecules trapped in stalled 50S ribosomal subunits, and thus maintains levels of free tRNAs and 50S ribosomes. The chain is Peptidyl-tRNA hydrolase from Rhodopseudomonas palustris (strain ATCC BAA-98 / CGA009).